A 334-amino-acid chain; its full sequence is YbbR-like domain-containing protein BB_0009 (334 aa).

A helical membrane pass occupies residues 22-38; it reads AISILIAILMFVAFNFN. YbbR-like domains are found at residues 43–128 and 138–220; these read ITTE…NVLL and VKIE…VVNI.

The protein resides in the membrane. The chain is YbbR-like domain-containing protein BB_0009 from Borreliella burgdorferi (strain ATCC 35210 / DSM 4680 / CIP 102532 / B31) (Borrelia burgdorferi).